A 631-amino-acid chain; its full sequence is Clathrin interactor 1 (631 aa).

Residues 24 to 157 enclose the ENTH domain; the sequence is NVVMNYSEIE…QDDDRLREER (134 aa). Arg-37 is a binding site for a 1,2-diacyl-sn-glycero-3-phospho-(1D-myo-inositol-4,5-bisphosphate). The tract at residues 60 to 62 is interaction with VTI1B; it reads FMY. An a 1,2-diacyl-sn-glycero-3-phospho-(1D-myo-inositol-4,5-bisphosphate)-binding site is contributed by Arg-75. 2 interaction with VTI1B regions span residues 102–104 and 150–161; these read SER and DDRLREERKKAK. 7 positions are modified to phosphoserine: Ser-171, Ser-174, Ser-213, Ser-218, Ser-235, Ser-253, and Ser-307. Positions 227 to 339 are disordered; it reads FRRKDREDSP…SSGDLVDLFD (113 aa). Residues 230–247 show a composition bias toward basic and acidic residues; that stretch reads KDREDSPERCSDSDEEKK. Residues 308–318 show a composition bias toward polar residues; that stretch reads PDQNASTHTPQ. Thr-316 bears the Phosphothreonine mark. Residues 319 to 331 show a composition bias toward low complexity; sequence SSAKPSVPSSKSS. 2 positions are modified to phosphoserine: Ser-320 and Ser-630.

It belongs to the epsin family. Binds clathrin heavy chain and AP-2. Interacts with VTI1B. Interacts with GGA2 (via GAE domain). Interacts with AP1G1 (via GAE domain). Interacts with AP1G2 (via GAE domain).

It is found in the cytoplasm. The protein resides in the perinuclear region. The protein localises to the membrane. Its subcellular location is the cytoplasmic vesicle. It localises to the clathrin-coated vesicle. In terms of biological role, binds to membranes enriched in phosphatidylinositol 4,5-bisphosphate (PtdIns(4,5)P2). May have a role in transport via clathrin-coated vesicles from the trans-Golgi network to endosomes. Stimulates clathrin assembly. The chain is Clathrin interactor 1 (Clint1) from Mus musculus (Mouse).